A 471-amino-acid polypeptide reads, in one-letter code: Glutamate--tRNA ligase (471 aa).

Positions 9 to 19 match the 'HIGH' region motif; that stretch reads PSPTGYLHVGG. Zn(2+)-binding residues include C98, C100, C125, and H127. The 'KMSKS' region motif lies at 237–241; the sequence is KLSKR. K240 contributes to the ATP binding site.

This sequence belongs to the class-I aminoacyl-tRNA synthetase family. Glutamate--tRNA ligase type 1 subfamily. In terms of assembly, monomer. Zn(2+) is required as a cofactor.

It is found in the cytoplasm. The enzyme catalyses tRNA(Glu) + L-glutamate + ATP = L-glutamyl-tRNA(Glu) + AMP + diphosphate. Catalyzes the attachment of glutamate to tRNA(Glu) in a two-step reaction: glutamate is first activated by ATP to form Glu-AMP and then transferred to the acceptor end of tRNA(Glu). The chain is Glutamate--tRNA ligase from Shigella boydii serotype 4 (strain Sb227).